A 324-amino-acid chain; its full sequence is UDP-N-acetylenolpyruvoylglucosamine reductase (324 aa).

The FAD-binding PCMH-type domain maps to 36–203; that stretch reads FRAGGLAELM…TSVLFEGYPE (168 aa). The active site involves arginine 183. Serine 232 serves as the catalytic Proton donor. Glutamate 302 is an active-site residue.

It belongs to the MurB family. FAD is required as a cofactor.

The protein resides in the cytoplasm. It catalyses the reaction UDP-N-acetyl-alpha-D-muramate + NADP(+) = UDP-N-acetyl-3-O-(1-carboxyvinyl)-alpha-D-glucosamine + NADPH + H(+). The protein operates within cell wall biogenesis; peptidoglycan biosynthesis. Its function is as follows. Cell wall formation. The protein is UDP-N-acetylenolpyruvoylglucosamine reductase of Rhizobium johnstonii (strain DSM 114642 / LMG 32736 / 3841) (Rhizobium leguminosarum bv. viciae).